The primary structure comprises 104 residues: N(4)-acetylcytidine amidohydrolase (104 aa).

One can recognise an ASCH domain in the interval 6 to 96; the sequence is ITFYQRFEAD…TIYPNEHESW (91 aa). Catalysis depends on K21, which acts as the Proton acceptor. T24 (nucleophile) is an active-site residue. The active-site Proton donor is the E74.

It belongs to the N(4)-acetylcytidine amidohydrolase family.

It catalyses the reaction N(4)-acetylcytidine + H2O = cytidine + acetate + H(+). The catalysed reaction is N(4)-acetyl-2'-deoxycytidine + H2O = 2'-deoxycytidine + acetate + H(+). The enzyme catalyses N(4)-acetylcytosine + H2O = cytosine + acetate + H(+). Its function is as follows. Catalyzes the hydrolysis of N(4)-acetylcytidine (ac4C). In Haemophilus influenzae (strain 86-028NP), this protein is N(4)-acetylcytidine amidohydrolase.